A 607-amino-acid chain; its full sequence is Large ribosomal subunit assembly factor BipA (607 aa).

Positions 3-198 constitute a tr-type G domain; the sequence is EKLRNIAIIA…AIVDHVPAPD (196 aa). Residues 15–20 and 128–131 each bind GTP; these read DHGKTT and NKVD.

The protein belongs to the TRAFAC class translation factor GTPase superfamily. Classic translation factor GTPase family. BipA subfamily. Monomer.

The protein localises to the cytoplasm. The enzyme catalyses GTP + H2O = GDP + phosphate + H(+). In terms of biological role, a 50S ribosomal subunit assembly protein with GTPase activity, required for 50S subunit assembly at low temperatures, may also play a role in translation. Binds GTP and analogs. Binds the 70S ribosome between the 30S and 50S subunits, in a similar position as ribosome-bound EF-G; it contacts a number of ribosomal proteins, both rRNAs and the A-site tRNA. The polypeptide is Large ribosomal subunit assembly factor BipA (Shigella flexneri).